A 483-amino-acid chain; its full sequence is MIQVLLVTVCLAVFPYQGSSIILESGNVNDYEVVYPRKVTALPKRAVQQKYEDAMQYEFKVNGEPVVLHLEKNKGLFSEDYSETHYSPDGREITTYPSVEDHCYYHGRIHNDADSTASISACDGLKGYFKLQGETYLIEPLKLPDSEAHAVYKYENIEKEDEAPKMCGVTQNWESDESIKKASQLYLTPEQQRFPQRYVKLAIVVDYGMYTKYNRDSDKITVRVHEMVNHITEMYRPLNIDITLSLLDVWSEKDLITVQSDSDVTLEVFGDWRESVLLKRRSHDCAHLLTDTKLNDNTIGVAYKKGMCDPKLSVGLVQDYSKNVFMVAVTMTHEIGHNLGMEHDEDKNGKKCKCDTCIMSPVISDKQSKLFSDCSKNDYQTFLTNYKPQCILNAPLRTDTVSTPVSGNELLEEGEDCYCHIPPNPCCDPATCKLTPGSQCAEGLCCDQCRFKKKGTICRFARGDYPDDRCTGLSDDCPRWNDL.

The N-terminal stretch at 1 to 20 (MIQVLLVTVCLAVFPYQGSS) is a signal peptide. A propeptide spanning residues 21-190 (IILESGNVND…KASQLYLTPE (170 aa)) is cleaved from the precursor. The Peptidase M12B domain occupies 197–395 (RYVKLAIVVD…YKPQCILNAP (199 aa)). Intrachain disulfides connect Cys-308–Cys-390, Cys-352–Cys-374, and Cys-354–Cys-357. Residue His-333 participates in Zn(2+) binding. The active site involves Glu-334. Zn(2+)-binding residues include His-337 and His-343. The propeptide occupies 396–411 (LRTDTVSTPVSGNELL). In terms of domain architecture, Disintegrin spans 403 to 483 (TPVSGNELLE…SDDCPRWNDL (81 aa)). 6 disulfide bridges follow: Cys-417-Cys-432, Cys-419-Cys-427, Cys-426-Cys-449, Cys-440-Cys-446, Cys-445-Cys-470, and Cys-458-Cys-477. A Cell attachment site motif is present at residues 462–464 (RGD).

Belongs to the venom metalloproteinase (M12B) family. P-II subfamily. P-IIa sub-subfamily. As to quaternary structure, monomer. The cofactor is Zn(2+). In terms of tissue distribution, expressed by the venom gland.

The protein localises to the secreted. Its function is as follows. Impairs hemostasis in the envenomed animal. Functionally, inhibits ADP- and collagen-induced human platelet aggregation with IC(50) of 123 and 135 nM, respectively. Inhibits sperm-egg binding in a concentration-dependent manner, but has no effect on the fusion of sperm-egg. This chain is Zinc metalloproteinase/disintegrin, found in Protobothrops jerdonii (Jerdon's pitviper).